Here is a 679-residue protein sequence, read N- to C-terminus: Transketolase 10 (679 aa).

His40 is a binding site for substrate. Thiamine diphosphate is bound by residues His80 and 129–131 (GPL). Position 170 (Asp170) interacts with Mg(2+). Residues Gly171 and Asn200 each coordinate thiamine diphosphate. Positions 200 and 202 each coordinate Mg(2+). His277, Arg371, and Ser398 together coordinate substrate. His277 contacts thiamine diphosphate. Positions 425 and 452 each coordinate thiamine diphosphate. The Proton donor role is filled by Glu425. His476, Asp484, and Arg535 together coordinate substrate.

It belongs to the transketolase family. In terms of assembly, homodimer. Requires Mg(2+) as cofactor. The cofactor is Ca(2+). Mn(2+) serves as cofactor. It depends on Co(2+) as a cofactor. Thiamine diphosphate is required as a cofactor. In terms of tissue distribution, leaves.

The enzyme catalyses D-sedoheptulose 7-phosphate + D-glyceraldehyde 3-phosphate = aldehydo-D-ribose 5-phosphate + D-xylulose 5-phosphate. In terms of biological role, could be involved in the conversion of sugars, which are a major phenomenon in the rehydration process. Its function is as follows. Catalyzes the transfer of a two-carbon ketol group from a ketose donor to an aldose acceptor, via a covalent intermediate with the cofactor thiamine pyrophosphate. This is Transketolase 10 (TKT10) from Craterostigma plantagineum (Blue gem).